The chain runs to 564 residues: MLASKFFMPTLKENPSDAVVPSHIYLVRGGFIRSLSAGIYEYLPLGLKVLRKIENIIRKHMDDSGALEVLLPILTPAELWKETGRWHVYGKELFRLKDRKDAEFALGPTHEETITDLVRKNVRSYKDLPLNFYQIQTKFRDEARPRYGLIRGREFIMKDGYSFDVSEEDAKKTYEVMKEAYHKIFKELGLDYLMVEADVGAIGGKFSHEFVVKVPSGEAHIVYCEKCGYAANVEAAKFHHHKLPPEEPKPIEKVYTPDIKSVEDVANFLNVPLTKLVKTLIYKIDDKDFVAVLIRGDRELNETKLANLFKAIDVRMATKEELESLGIPEGFVGPIGLNLPIYADFSLKELYNIVVGANEKDYHYINANIDRDFKVSGFYDLATAKEGDPCPVCHLPLKETTGLEVGHIFLLGTKYSESMKAYFVDKDGKEKSIIMGCYGIGVSRLISAIVEQYHDDKGIIWPENLAPFNVHILVLNPKDQESLNVGFDIYKKLKEKGLDVLLDERDESAGAKFKDADLIGIPHRIVIGKALKEGKVEYQKRDGSIKELVDVKLIINKLMDGYHG.

The protein belongs to the class-II aminoacyl-tRNA synthetase family. ProS type 1 subfamily. In terms of assembly, homodimer.

The protein resides in the cytoplasm. It carries out the reaction tRNA(Pro) + L-proline + ATP = L-prolyl-tRNA(Pro) + AMP + diphosphate. In terms of biological role, catalyzes the attachment of proline to tRNA(Pro) in a two-step reaction: proline is first activated by ATP to form Pro-AMP and then transferred to the acceptor end of tRNA(Pro). As ProRS can inadvertently accommodate and process non-cognate amino acids such as alanine and cysteine, to avoid such errors it has two additional distinct editing activities against alanine. One activity is designated as 'pretransfer' editing and involves the tRNA(Pro)-independent hydrolysis of activated Ala-AMP. The other activity is designated 'posttransfer' editing and involves deacylation of mischarged Ala-tRNA(Pro). The misacylated Cys-tRNA(Pro) is not edited by ProRS. This chain is Proline--tRNA ligase, found in Sulfurihydrogenibium sp. (strain YO3AOP1).